The chain runs to 69 residues: Disintegrin EMF10A (69 aa).

Residues 1–66 (MNSANPCCDP…DCPRNPWKSE (66 aa)) form the Disintegrin domain. 4 disulfides stabilise this stretch: C7–C30, C21–C27, C26–C51, and C39–C58. The Cell attachment site signature appears at 43–45 (RGD).

This sequence belongs to the disintegrin family. Dimeric disintegrin subfamily. Heterodimer with EMF10B; disulfide-linked. As to expression, expressed by the venom gland.

It is found in the secreted. Functionally, extremely potent and selective inhibitor of integrin alpha-5/beta-1 (ITGA5/ITGB1). Partially inhibits adhesion of cells expressing alpha-IIb/beta-3 (ITGA2B/ITGB3), alpha-V/beta-3 (ITGAV/ITGB3), and alpha-4/beta-1 (ITGA4/ITGB1) to appropriate ligands only at concentration higher than 500 nM. Weakly inhibits ADP-induced platelet aggregation. The polypeptide is Disintegrin EMF10A (Eristicophis macmahoni (Leaf-nosed viper)).